Consider the following 565-residue polypeptide: MHIIFQYPIVDLRDIVSGGNGRLNDPKWPDPQERRQSFVSGFGKVKSRNLGGSDNFTGESYYCDSHSAIKFKELQHQGFSEGITTPASIFNSYRRYYNDGRFVGKVEIGLIDNLEKIIRNYPGSEGIQISSILKHYSNLEATVEDEQVKLYKAGPRLSKKYQRESTLREKHFQINPDYVQTGELTIVLTYSSHERLIVPRRSFSLEKIELPNDAGSIELFGYKLKQDGYPTKVWIIKIPANFRSKSGKHKTILRDLRMNLLRIHLEKETIKILLNAIKYKQIELEKESAEAKQVNAYFEQTSKKLFRKSRYDIKQENLLDFALQSEKSMDKGSFNSLKENITYFQDEFMLDNLGKLVGSMAVKPMLFVCSNPRDSNFIDFDKEYKDLKYNLQRAIDRDHYDIEIELSVTKDEFKDILDRYKPQFLHLSMHATVKDGLHFEDKNKAILPMSVKEFKQIIERYTKKHELKLVLISACNSKNHAKAIKEYCDFAIGTKAVFPVPAALIYSNNFYTTLFNGYQKDLEYCHSGAINAIEFNNPKFDDLDYKNKKIRVHEIPVLIKNSKYV.

Probably a dedicated protease for substrate gasdermin bGSDM; cleaves the bGSDM precursor, releasing the pore-forming moiety, which integrates into the membrane and triggers cell death. Involved in defense against bacteriophages. Expression of bGSDM and this neighboring protease is not toxic in E.coli. The chain is Probable protease Gilli_2517 from Gillisia limnaea (strain DSM 15749 / LMG 21470 / R-8282).